The chain runs to 342 residues: Replication factor C subunit 4 (342 aa).

Residues Val-24, Val-36, 61–68 (GMPGIGKT), Asn-157, and Arg-215 contribute to the ATP site.

The protein belongs to the activator 1 small subunits family. In terms of assembly, heteropentamer of subunits rfc1, rfc2, rfc3, rfc4 and rfc5 that forms a complex (RFC) with PCNA in the presence of ATP. Two other complexes exist where rfc1 can be replaced by either ctf18 or elg1 to form the ctf18-RFC or the elg1-RFC complexes respectively.

Its subcellular location is the nucleus. In terms of biological role, the elongation of primed DNA templates by DNA polymerase delta and epsilon requires the action of the accessory proteins PCNA and activator 1. The polypeptide is Replication factor C subunit 4 (rfc4) (Schizosaccharomyces pombe (strain 972 / ATCC 24843) (Fission yeast)).